Here is a 210-residue protein sequence, read N- to C-terminus: N-(5'-phosphoribosyl)anthranilate isomerase (210 aa).

This sequence belongs to the TrpF family.

It carries out the reaction N-(5-phospho-beta-D-ribosyl)anthranilate = 1-(2-carboxyphenylamino)-1-deoxy-D-ribulose 5-phosphate. The protein operates within amino-acid biosynthesis; L-tryptophan biosynthesis; L-tryptophan from chorismate: step 3/5. This Pseudomonas fluorescens (strain SBW25) protein is N-(5'-phosphoribosyl)anthranilate isomerase.